The primary structure comprises 547 residues: Chaperonin GroEL (547 aa).

ATP-binding positions include 30 to 33, Lys-51, 87 to 91, Gly-415, 479 to 481, and Asp-495; these read TLGP, DGTTT, and NAA. The segment at 524-547 is disordered; it reads APKKDEPTPPAAGGGMGGMGGMDF. The span at 535–547 shows a compositional bias: gly residues; sequence AGGGMGGMGGMDF.

Belongs to the chaperonin (HSP60) family. In terms of assembly, forms a cylinder of 14 subunits composed of two heptameric rings stacked back-to-back. Interacts with the co-chaperonin GroES.

Its subcellular location is the cytoplasm. The catalysed reaction is ATP + H2O + a folded polypeptide = ADP + phosphate + an unfolded polypeptide.. Functionally, together with its co-chaperonin GroES, plays an essential role in assisting protein folding. The GroEL-GroES system forms a nano-cage that allows encapsulation of the non-native substrate proteins and provides a physical environment optimized to promote and accelerate protein folding. The polypeptide is Chaperonin GroEL (Xylella fastidiosa (strain M23)).